The chain runs to 501 residues: Cystine/glutamate transporter (501 aa).

At 1-43 the chain is on the cytoplasmic side; it reads MVRKPVVSTISKGGYLQGNVNGRLPSLGNKEPPGQEKVQLKRK. Position 26 is a phosphoserine (S26). Residues 44–64 form a helical membrane-spanning segment; sequence VTLLRGVSIIIGTIIGAGIFI. Over 65-74 the chain is Extracellular; that stretch reads SPKGVLQNTG. The helical transmembrane segment at 75-95 threads the bilayer; that stretch reads SVGMSLTIWTVCGVLSLFGAL. Topologically, residues 96–101 are cytoplasmic; the sequence is SYAELG. Residues 102–116 lie within the membrane without spanning it; the sequence is TTIKKSGGHYTYILE. The Cytoplasmic segment spans residues 117–130; that stretch reads VFGPLPAFVRVWVE. The chain crosses the membrane as a helical span at residues 131–150; that stretch reads LLIIRPAATAVISLAFGRYI. An L-glutamate-binding site is contributed by R135. Topologically, residues 151 to 163 are extracellular; that stretch reads LEPFFIQCEIPEL. The helical transmembrane segment at 164 to 179 threads the bilayer; sequence AIKLITAVGITVVMVL. Topologically, residues 180-193 are cytoplasmic; that stretch reads NSMSVSWSARIQIF. The chain crosses the membrane as a helical span at residues 194–210; sequence LTFCKLTAILIIIVPGV. Residues 211–234 lie on the Extracellular side of the membrane; sequence MQLIKGQTQNFKDAFSGRDSSITR. The chain crosses the membrane as a helical span at residues 235–255; the sequence is LPLAFYYGMYAYAGWFYLNFV. Residue Y244 participates in L-glutamate binding. Over 256–265 the chain is Cytoplasmic; sequence TEEVENPEKT. Residues 266–286 form a helical membrane-spanning segment; that stretch reads IPLAICISMAIVTIGYVLTNV. Residues 287–317 lie on the Extracellular side of the membrane; that stretch reads AYFTTINAEELLLSNAVAVTFSERLLGNFSL. A glycan (N-linked (GlcNAc...) asparagine) is linked at N314. Residues 318-338 form a helical membrane-spanning segment; it reads AVPIFVALSCFGSMNGGVFAV. At 339–364 the chain is on the cytoplasmic side; it reads SRLFYVASREGHLPEILSMIHVRKHT. The chain crosses the membrane as a helical span at residues 365-385; sequence PLPAVIVLHPLTMIMLFSGDL. Residues 386–387 are Extracellular-facing; sequence DS. The chain crosses the membrane as a helical span at residues 388 to 408; the sequence is LLNFLSFARWLFIGLAVAGLI. Residues 409 to 422 are Cytoplasmic-facing; that stretch reads YLRYKCPDMHRPFK. A helical transmembrane segment spans residues 423–443; it reads VPLFIPALFSFTCLFMVALSL. Topologically, residues 444–449 are extracellular; sequence YSDPFS. Residues 450-470 form a helical membrane-spanning segment; sequence TGIGFVITLTGVPAYYLFIIW. At 471 to 501 the chain is on the cytoplasmic side; the sequence is DKKPRWFRIMSEKITRTLQIILEVVPEEDKL.

Belongs to the amino acid-polyamine-organocation (APC) superfamily. L-type amino acid transporter (LAT) (TC 2.A.3.8) family. As to quaternary structure, disulfide-linked heterodimer with the amino acid transport protein SLC3A2/4F2hc; this interaction mediates cell membrane localization. Ubiquitinated by TRIM26; leading to proteasomal degradation. In terms of tissue distribution, expressed in term placenta and primary term cytotrophoblast. Expressed mainly in the brain, but also in pancreas.

Its subcellular location is the cell membrane. It localises to the cell projection. It is found in the microvillus membrane. The enzyme catalyses L-cystine(out) + L-glutamate(in) = L-cystine(in) + L-glutamate(out). It catalyses the reaction an L-alpha-amino acid(in) + L-kynurenine(out) = an L-alpha-amino acid(out) + L-kynurenine(in). It carries out the reaction N-acetyl-L-cysteine(out) + L-glutamate(in) = N-acetyl-L-cysteine(in) + L-glutamate(out). With respect to regulation, inhibited by erastin and sulfasalazine. Inhibited by (S)-lactate. Inactivated by p-chloromercuribenzoic acid and p-chloromercuribenzenesulfonic acid. Heterodimer with SLC3A2, that functions as an antiporter by mediating the exchange of extracellular anionic L-cystine and intracellular L-glutamate across the cellular plasma membrane. Provides L-cystine for the maintenance of the redox balance between extracellular L-cystine and L-cysteine and for the maintenance of the intracellular levels of glutathione that is essential for cells protection from oxidative stress. The transport is sodium-independent, electroneutral with a stoichiometry of 1:1, and is drove by the high intracellular concentration of L-glutamate and the intracellular reduction of L-cystine. In addition, mediates the import of L-kynurenine leading to anti-ferroptotic signaling propagation required to maintain L-cystine and glutathione homeostasis. Moreover, mediates N-acetyl-L-cysteine uptake into the placenta leading to subsequently down-regulation of pathways associated with oxidative stress, inflammation and apoptosis. In vitro can also transport L-aspartate. May participate in astrocyte and meningeal cell proliferation during development and can provide neuroprotection by promoting glutathione synthesis and delivery from non-neuronal cells such as astrocytes and meningeal cells to immature neurons. Controls the production of pheomelanin pigment directly. The polypeptide is Cystine/glutamate transporter (Homo sapiens (Human)).